The following is a 288-amino-acid chain: 2-methoxy-6-polyprenyl-1,4-benzoquinol methylase, mitochondrial (288 aa).

Residues T68, D102, and S146 each contribute to the S-adenosyl-L-methionine site. Positions 260 to 270 are enriched in low complexity; that stretch reads PITPTTSSDIP. Positions 260-288 are disordered; that stretch reads PITPTTSSDIPAQNTSEATCEVKPEPNSA. Residues 279 to 288 are compositionally biased toward basic and acidic residues; the sequence is CEVKPEPNSA.

The protein belongs to the class I-like SAM-binding methyltransferase superfamily. MenG/UbiE family. As to quaternary structure, component of a multi-subunit COQ enzyme complex.

It localises to the mitochondrion inner membrane. It carries out the reaction a 2-methoxy-6-(all-trans-polyprenyl)benzene-1,4-diol + S-adenosyl-L-methionine = a 5-methoxy-2-methyl-3-(all-trans-polyprenyl)benzene-1,4-diol + S-adenosyl-L-homocysteine + H(+). It functions in the pathway cofactor biosynthesis; ubiquinone biosynthesis. Methyltransferase required for the conversion of 2-polyprenyl-6-methoxy-1,4-benzoquinol (DDMQH2) to 2-polyprenyl-3-methyl-6-methoxy-1,4-benzoquinol (DMQH2). The sequence is that of 2-methoxy-6-polyprenyl-1,4-benzoquinol methylase, mitochondrial from Leishmania donovani.